Consider the following 299-residue polypeptide: Oxygen-dependent coproporphyrinogen-III oxidase (299 aa).

Ser92 contacts substrate. Mn(2+)-binding residues include His96 and His106. Residue His106 is the Proton donor of the active site. Substrate is bound at residue 108-110 (NVR). Positions 145 and 175 each coordinate Mn(2+). The important for dimerization stretch occupies residues 240-275 (YVEFNLVWDRGTLFGLQTGGRTESILMSMPPLVRWE). Substrate is bound at residue 258 to 260 (GGR).

Belongs to the aerobic coproporphyrinogen-III oxidase family. Homodimer. Mn(2+) is required as a cofactor.

Its subcellular location is the cytoplasm. It carries out the reaction coproporphyrinogen III + O2 + 2 H(+) = protoporphyrinogen IX + 2 CO2 + 2 H2O. The protein operates within porphyrin-containing compound metabolism; protoporphyrin-IX biosynthesis; protoporphyrinogen-IX from coproporphyrinogen-III (O2 route): step 1/1. In terms of biological role, involved in the heme biosynthesis. Catalyzes the aerobic oxidative decarboxylation of propionate groups of rings A and B of coproporphyrinogen-III to yield the vinyl groups in protoporphyrinogen-IX. In Escherichia coli (strain SE11), this protein is Oxygen-dependent coproporphyrinogen-III oxidase.